The following is a 399-amino-acid chain: Acetate kinase (399 aa).

Position 10 (Asn-10) interacts with Mg(2+). Lys-17 contributes to the ATP binding site. A substrate-binding site is contributed by Arg-91. Catalysis depends on Asp-150, which acts as the Proton donor/acceptor. Residues 210-214 (HLGNG), 285-287 (DFR), and 333-337 (GIGEN) each bind ATP. Glu-387 provides a ligand contact to Mg(2+).

It belongs to the acetokinase family. As to quaternary structure, homodimer. Mg(2+) serves as cofactor. Requires Mn(2+) as cofactor.

The protein localises to the cytoplasm. It catalyses the reaction acetate + ATP = acetyl phosphate + ADP. It functions in the pathway metabolic intermediate biosynthesis; acetyl-CoA biosynthesis; acetyl-CoA from acetate: step 1/2. Functionally, catalyzes the formation of acetyl phosphate from acetate and ATP. Can also catalyze the reverse reaction. In Wigglesworthia glossinidia brevipalpis, this protein is Acetate kinase.